A 265-amino-acid chain; its full sequence is Putative cysteine-rich receptor-like protein kinase 9 (265 aa).

Positions 1–23 are cleaved as a signal peptide; sequence MSSLISFIFLFLFSFLTSFKASA. 2 Gnk2-homologous domains span residues 27-131 and 142-244; these read FYLN…DKNI and FILS…LYSF. Asn-35, Asn-60, Asn-69, Asn-153, Asn-177, and Asn-246 each carry an N-linked (GlcNAc...) asparagine glycan.

It belongs to the protein kinase superfamily. Ser/Thr protein kinase family. CRK subfamily.

The protein localises to the secreted. This Arabidopsis thaliana (Mouse-ear cress) protein is Putative cysteine-rich receptor-like protein kinase 9 (CRK9).